A 98-amino-acid chain; its full sequence is MASLLCCGPKLAACGIVLSAWGVIMLIMLGIFFNVHSAVLIEDVPFTEKDFENGPQNIYNLYEQVSYNCFIAASLYLLLGGFSFCQVRLNKRKEYMVR.

2 helical membrane-spanning segments follow: residues 13–33 (ACGI…GIFF) and 65–85 (VSYN…FSFC).

Belongs to the RNase K family. As to quaternary structure, interacts with the proton translocation complex V0 of the V-ATPase. Interacts with ATP6AP1. Expressed in brain (at protein level).

It localises to the endomembrane system. Its subcellular location is the cytoplasmic vesicle. The protein resides in the clathrin-coated vesicle membrane. Its function is as follows. Endoribonuclease which preferentially cleaves ApU and ApG phosphodiester bonds. Hydrolyzes UpU bonds at a lower rate. Regulates the activity of vacuolar (H+)-ATPase (V-ATPase) which is responsible for acidifying and maintaining the pH of intracellular compartments. Required at an early stage of receptor-mediated endocytosis. The protein is Ribonuclease kappa (RNASEK) of Bos taurus (Bovine).